The primary structure comprises 363 residues: Pyrimidine monooxygenase RutA (363 aa).

Residues 49 to 50 (IK), asparagine 115, glutamate 124, 140 to 141 (RY), and serine 190 each bind FMN.

The protein belongs to the NtaA/SnaA/DszA monooxygenase family. RutA subfamily.

It catalyses the reaction uracil + FMNH2 + NADH + O2 = (Z)-3-ureidoacrylate + FMN + NAD(+) + H2O + H(+). The catalysed reaction is thymine + FMNH2 + NADH + O2 = (Z)-2-methylureidoacrylate + FMN + NAD(+) + H2O + H(+). In terms of biological role, catalyzes the pyrimidine ring opening between N-3 and C-4 by an unusual flavin hydroperoxide-catalyzed mechanism, adding oxygen atoms in the process to yield ureidoacrylate peracid, that immediately reacts with FMN forming ureidoacrylate and FMN-N(5)-oxide. The FMN-N(5)-oxide reacts spontaneously with NADH to produce FMN. Requires the flavin reductase RutF to regenerate FMN in vivo. The chain is Pyrimidine monooxygenase RutA (rutA) from Agrobacterium fabrum (strain C58 / ATCC 33970) (Agrobacterium tumefaciens (strain C58)).